The chain runs to 56 residues: Putative zinc-binding protein YnfU (56 aa).

Residues cysteine 19, cysteine 22, cysteine 41, and cysteine 44 each coordinate Zn(2+).

Requires Zn(2+) as cofactor.

The chain is Putative zinc-binding protein YnfU from Escherichia coli (strain K12).